The primary structure comprises 518 residues: MGSKELLKEEDFLGSTEDRADFDQAMFPVMETFEINDPVPKKRNGGTFCMAVMAIHLILLTAGTALLLIQVLNLQEQLQMLEMCCGNGSLAIEDKPFFSLQWAPKTHLVPRAQGLQALQAQLSWVHTSQEQLRQQFNNLTQNPELFQIKGERGSPGPKGAPGAPGIPGLPGPAAEKGEKGAAGRDGTPGVQGPQGPPGSKGEAGLQGLTGAPGKQGATGAPGPRGEKGSKGDIGLTGPKGEHGTKGDKGDLGLPGNKGDMGMKGDTGPMGSPGAQGGKGDAGKPGLPGLAGSPGVKGDQGKPGVQGVPGPQGAPGLSGAKGEPGRTGLPGPAGPPGIAGNPGIAGVKGSKGDTGIQGQKGTKGESGVPGLVGRKGDTGSPGLAGPKGEPGRVGQKGDPGMKGSSGQQGQKGEKGQKGESFQRVRIMGGTNRGRAEVYYNNEWGTICDDDWDNNDATVFCRMLGYSRGRALSSYGGGSGNIWLDNVNCRGTENSLWDCSKNSWGNHNCVHNEDAGVECS.

Over 1-48 the chain is Cytoplasmic; the sequence is MGSKELLKEEDFLGSTEDRADFDQAMFPVMETFEINDPVPKKRNGGTF. Residues 49–69 traverse the membrane as a helical; Signal-anchor for type II membrane protein segment; that stretch reads CMAVMAIHLILLTAGTALLLI. Residues 70–518 lie on the Extracellular side of the membrane; it reads QVLNLQEQLQ…HNEDAGVECS (449 aa). 2 N-linked (GlcNAc...) asparagine glycosylation sites follow: N87 and N138. The tract at residues 147 to 426 is disordered; that stretch reads QIKGERGSPG…GESFQRVRIM (280 aa). In terms of domain architecture, Collagen-like spans 149 to 418; sequence KGERGSPGPK…QKGEKGQKGE (270 aa). Over residues 154–163 the composition is skewed to low complexity; it reads SPGPKGAPGA. Residues 239 to 250 are compositionally biased toward basic and acidic residues; sequence KGEHGTKGDKGD. Low complexity-rich tracts occupy residues 293-314 and 325-344; these read PGVKGDQGKPGVQGVPGPQGAP and RTGLPGPAGPPGIAGNPGIA. The span at 410–421 shows a compositional bias: basic and acidic residues; it reads KGEKGQKGESFQ. The SRCR domain maps to 423-518; it reads VRIMGGTNRG…HNEDAGVECS (96 aa). Cystine bridges form between C446-C507, C459-C517, and C487-C497.

As to quaternary structure, homotrimer; disulfide-linked. Trimers may assemble in larger oligomers thus resulting in the creation of a large surface capable of interacting with very large ligands. Post-translationally, N-glycosylated. In terms of tissue distribution, expressed in subpopulations of macrophages in the spleen and the medullary cord of lymph nodes (at protein level).

It is found in the cell membrane. Its function is as follows. Pattern recognition receptor (PRR) which binds Gram-positive and Gram-negative bacteria. Also plays a role in binding of unopsonized particles by alveolar macrophages. Binds to the secretoglobin SCGB3A2. This is Macrophage receptor MARCO (Marco) from Mus musculus (Mouse).